The primary structure comprises 174 residues: Stigma-specific STIG1-like protein 4 (174 aa).

The first 25 residues, 1–25, serve as a signal peptide directing secretion; that stretch reads MMSIKLTLCALIFFLLNSLLHHVLG. The interval 140–174 is disordered; that stretch reads PSSQPGKRHRRHKFHRPRPPPSPDSKLNYDDHDDE. Positions 145–157 are enriched in basic residues; sequence GKRHRRHKFHRPR.

This sequence belongs to the STIG1 family.

Its subcellular location is the secreted. Endosperm-specific cysteine-rich protein that acts downstream of BHLH95/ZOU to modify the interface between embryo and endosperm and mediate the separation of these two tissues during seed development. Necessary for the biogenesis of the embryo sheath, an extracuticular endosperm-derived structure at the surface of the embryo. Required for the separation of embryo and endosperm, and for normal progression of the embryo through the endosperm tissue. Required for the formation of a normal embryonic cuticle. In Arabidopsis thaliana (Mouse-ear cress), this protein is Stigma-specific STIG1-like protein 4.